Consider the following 304-residue polypeptide: Ornithine carbamoyltransferase (304 aa).

Residues 53-56 (STRT), Q80, R104, and 131-134 (HPCQ) each bind carbamoyl phosphate. L-ornithine-binding positions include N162, D219, and 223–224 (SM). Carbamoyl phosphate is bound by residues 259-260 (CL) and R287.

The protein belongs to the aspartate/ornithine carbamoyltransferase superfamily. OTCase family.

It is found in the cytoplasm. The enzyme catalyses carbamoyl phosphate + L-ornithine = L-citrulline + phosphate + H(+). Its pathway is amino-acid biosynthesis; L-arginine biosynthesis; L-arginine from L-ornithine and carbamoyl phosphate: step 1/3. In terms of biological role, reversibly catalyzes the transfer of the carbamoyl group from carbamoyl phosphate (CP) to the N(epsilon) atom of ornithine (ORN) to produce L-citrulline. This chain is Ornithine carbamoyltransferase, found in Herminiimonas arsenicoxydans.